The chain runs to 200 residues: COMM domain-containing protein 7 (200 aa).

One can recognise a COMM domain in the interval 133–200; the sequence is QLIDMEWRFG…RVRASMECLS (68 aa).

This sequence belongs to the COMM domain-containing protein 7 family. Component of the commander complex consisting of the CCC subcomplex and the retriever subcomplex. Component of the CCC (COMMD/CCDC22/CCDC93) subcomplex consisting of COMMD1, COMMD2, COMMD3, COMMD4, COMMD5, COMMD6, COMMD7, COMMD8, COMMD9, COMMD10, CCDC22 and CCDC93; within the complex forms a heterodimer with COMMD9. Interacts with RELA. Interacts with CCDC22, CCDC93, SCNN1B, CUL7.

The protein localises to the cytoplasmic vesicle. Functionally, scaffold protein in the commander complex that is essential for endosomal recycling of transmembrane cargos; the commander complex is composed of the CCC subcomplex and the retriever subcomplex. May modulate activity of cullin-RING E3 ubiquitin ligase (CRL) complexes. Associates with the NF-kappa-B complex and suppresses its transcriptional activity. The polypeptide is COMM domain-containing protein 7 (Commd7) (Mus musculus (Mouse)).